Here is a 170-residue protein sequence, read N- to C-terminus: Adenine phosphoribosyltransferase (170 aa).

The protein belongs to the purine/pyrimidine phosphoribosyltransferase family. As to quaternary structure, homodimer.

The protein localises to the cytoplasm. The catalysed reaction is AMP + diphosphate = 5-phospho-alpha-D-ribose 1-diphosphate + adenine. It participates in purine metabolism; AMP biosynthesis via salvage pathway; AMP from adenine: step 1/1. Its function is as follows. Catalyzes a salvage reaction resulting in the formation of AMP, that is energically less costly than de novo synthesis. The sequence is that of Adenine phosphoribosyltransferase from Enterococcus faecalis (strain ATCC 700802 / V583).